Consider the following 228-residue polypeptide: MMNDMRNDDPNFNVMGNFDHGLTLALSKGRILKETLPLLEAAGINLLEDPEKSRKLIFPTTHQKVRILILRASDVPTYVENGAADFGVAGKDVLMEHGAQHVYELLDLKIANCKLMTAGKVGMQHPKGRLKIATKYVNLTRQYYASLGEQVDVIKLYGSMELAPLVGLGDYIVDVVDTGNTLRANGLEPLEEIMKVSSRLIVNKASFKRKQALLDPILAQVEEAVNQR.

This sequence belongs to the ATP phosphoribosyltransferase family. Short subfamily. As to quaternary structure, heteromultimer composed of HisG and HisZ subunits.

The protein localises to the cytoplasm. The catalysed reaction is 1-(5-phospho-beta-D-ribosyl)-ATP + diphosphate = 5-phospho-alpha-D-ribose 1-diphosphate + ATP. It participates in amino-acid biosynthesis; L-histidine biosynthesis; L-histidine from 5-phospho-alpha-D-ribose 1-diphosphate: step 1/9. Its function is as follows. Catalyzes the condensation of ATP and 5-phosphoribose 1-diphosphate to form N'-(5'-phosphoribosyl)-ATP (PR-ATP). Has a crucial role in the pathway because the rate of histidine biosynthesis seems to be controlled primarily by regulation of HisG enzymatic activity. The chain is ATP phosphoribosyltransferase from Acinetobacter baylyi (strain ATCC 33305 / BD413 / ADP1).